The chain runs to 429 residues: Ribosomal RNA small subunit methyltransferase B (429 aa).

Residues 254-260, Asp-277, Asp-303, and Asp-322 contribute to the S-adenosyl-L-methionine site; that span reads CAAPGGK. Catalysis depends on Cys-375, which acts as the Nucleophile.

It belongs to the class I-like SAM-binding methyltransferase superfamily. RsmB/NOP family.

It is found in the cytoplasm. The catalysed reaction is cytidine(967) in 16S rRNA + S-adenosyl-L-methionine = 5-methylcytidine(967) in 16S rRNA + S-adenosyl-L-homocysteine + H(+). Specifically methylates the cytosine at position 967 (m5C967) of 16S rRNA. In Cronobacter sakazakii (strain ATCC BAA-894) (Enterobacter sakazakii), this protein is Ribosomal RNA small subunit methyltransferase B.